Here is a 172-residue protein sequence, read N- to C-terminus: uncharacterized protein (172 aa).

Low complexity predominate over residues M1 to A28. Positions M1–G172 are disordered. Residues P58–H68 are compositionally biased toward basic residues. Residues T80–R100 show a composition bias toward gly residues. Over residues P129–A138 the composition is skewed to low complexity. Residues P139–R165 are compositionally biased toward gly residues.

This is an uncharacterized protein from Homo sapiens (Human).